The following is a 361-amino-acid chain: MSKRAFNFCAGPAALPEAVLLRAQAELLDWHGKGLSVMEMSHRSDEFVSIANKAEQDLRDLLSIPSNYKVLFLQGGASQQFAQIALNLLPENGKADYIDTGIWSQKAIDEASRYGTINVAASAKAYDYFAIPGQNEWTLSRDAAYVHYAPNETIGGLEFNWIPETGDVPLVADMSSDILSRPVDISRFGMIYAGAQKNIGPSGVVVVIIREDLLGRARTLCPTMLDYKVAADNGSMYNTPPTLAWYLSGLVFEWLKEQGGVEAIGKLNDIKQRTLYDFIDASGLYSNPINTPDRSWMNVPFRLADDRLDKPFLAGADANGLLNLKGHRSVGGMRASIYNAVDINAVNALVAYMKDFEKEHG.

R43 provides a ligand contact to L-glutamate. Residues 77–78, W103, T153, D173, and Q196 contribute to the pyridoxal 5'-phosphate site; that span reads AS. N6-(pyridoxal phosphate)lysine is present on K197. A pyridoxal 5'-phosphate-binding site is contributed by 238–239; the sequence is NT.

The protein belongs to the class-V pyridoxal-phosphate-dependent aminotransferase family. SerC subfamily. Homodimer. Pyridoxal 5'-phosphate is required as a cofactor.

The protein localises to the cytoplasm. It carries out the reaction O-phospho-L-serine + 2-oxoglutarate = 3-phosphooxypyruvate + L-glutamate. It catalyses the reaction 4-(phosphooxy)-L-threonine + 2-oxoglutarate = (R)-3-hydroxy-2-oxo-4-phosphooxybutanoate + L-glutamate. The protein operates within amino-acid biosynthesis; L-serine biosynthesis; L-serine from 3-phospho-D-glycerate: step 2/3. It functions in the pathway cofactor biosynthesis; pyridoxine 5'-phosphate biosynthesis; pyridoxine 5'-phosphate from D-erythrose 4-phosphate: step 3/5. Functionally, catalyzes the reversible conversion of 3-phosphohydroxypyruvate to phosphoserine and of 3-hydroxy-2-oxo-4-phosphonooxybutanoate to phosphohydroxythreonine. This is Phosphoserine aminotransferase from Pseudomonas syringae pv. tomato (strain ATCC BAA-871 / DC3000).